Here is a 135-residue protein sequence, read N- to C-terminus: Class I hydrophobin 2 (135 aa).

The N-terminal stretch at 1–20 (MFARLTSTLFALAAVSAVFA) is a signal peptide. 4 disulfides stabilise this stretch: C29/C114, C36/C107, C37/C73, and C115/C128. 2 N-linked (GlcNAc...) asparagine glycosylation sites follow: N117 and N132.

This sequence belongs to the fungal hydrophobin family. Self-assembles to form functional amyloid fibrils called rodlets. Self-assembly into fibrillar rodlets occurs spontaneously at hydrophobic:hydrophilic interfaces and the rodlets further associate laterally to form amphipathic monolayers.

It localises to the secreted. Its subcellular location is the cell wall. Functionally, aerial growth, conidiation, and dispersal of filamentous fungi in the environment rely upon a capability of their secreting small amphipathic proteins called hydrophobins (HPBs) with low sequence identity. Class I can self-assemble into an outermost layer of rodlet bundles on aerial cell surfaces, conferring cellular hydrophobicity that supports fungal growth, development and dispersal; whereas Class II form highly ordered films at water-air interfaces through intermolecular interactions but contribute nothing to the rodlet structure. The protein is Class I hydrophobin 2 of Coprinopsis cinerea (strain Okayama-7 / 130 / ATCC MYA-4618 / FGSC 9003) (Inky cap fungus).